The chain runs to 324 residues: tRNA-dihydrouridine(20a/20b) synthase [NAD(P)+]-like (324 aa).

Residues 33–35 and Gln-87 contribute to the FMN site; that span reads PMV. Residue Cys-116 is the Proton donor of the active site. FMN is bound by residues Lys-158, His-186, 216-218, and 240-241; these read NGD and AR.

Belongs to the Dus family. Dus4 subfamily. FMN serves as cofactor.

It carries out the reaction 5,6-dihydrouridine(20a) in tRNA + NADP(+) = uridine(20a) in tRNA + NADPH + H(+). The enzyme catalyses 5,6-dihydrouridine(20a) in tRNA + NAD(+) = uridine(20a) in tRNA + NADH + H(+). The catalysed reaction is 5,6-dihydrouridine(20b) in tRNA + NAD(+) = uridine(20b) in tRNA + NADH + H(+). It catalyses the reaction 5,6-dihydrouridine(20b) in tRNA + NADP(+) = uridine(20b) in tRNA + NADPH + H(+). Its function is as follows. Catalyzes the synthesis of dihydrouridine, a modified base found in the D-loop of most tRNAs. The polypeptide is tRNA-dihydrouridine(20a/20b) synthase [NAD(P)+]-like (Dus4l) (Mus musculus (Mouse)).